The chain runs to 362 residues: Probable branched-chain-amino-acid aminotransferase (362 aa).

N6-(pyridoxal phosphate)lysine is present on K202.

The protein belongs to the class-IV pyridoxal-phosphate-dependent aminotransferase family. Requires pyridoxal 5'-phosphate as cofactor.

It catalyses the reaction L-leucine + 2-oxoglutarate = 4-methyl-2-oxopentanoate + L-glutamate. The catalysed reaction is L-isoleucine + 2-oxoglutarate = (S)-3-methyl-2-oxopentanoate + L-glutamate. The enzyme catalyses L-valine + 2-oxoglutarate = 3-methyl-2-oxobutanoate + L-glutamate. Its pathway is amino-acid biosynthesis; L-isoleucine biosynthesis; L-isoleucine from 2-oxobutanoate: step 4/4. It functions in the pathway amino-acid biosynthesis; L-leucine biosynthesis; L-leucine from 3-methyl-2-oxobutanoate: step 4/4. It participates in amino-acid biosynthesis; L-valine biosynthesis; L-valine from pyruvate: step 4/4. Acts on leucine, isoleucine and valine. This chain is Probable branched-chain-amino-acid aminotransferase (ilvE), found in Streptomyces coelicolor (strain ATCC BAA-471 / A3(2) / M145).